The following is a 772-amino-acid chain: Carnitine O-palmitoyltransferase 1, muscle isoform (772 aa).

Residues 1 to 47 lie on the Cytoplasmic side of the membrane; it reads MAEAHQAVAFQFTVTPDGVDFRLSREALKHVYLSGINSWKKRLIRIK. The chain crosses the membrane as a helical span at residues 48–73; that stretch reads NGILRGVYPGSPTSWLVVIMATVGSS. Residues 74 to 102 are Mitochondrial intermembrane-facing; it reads FCNVDISLGLVSCIQRCLPQGCGPYQTPQ. A helical transmembrane segment spans residues 103–122; that stretch reads TRALLSMAIFSTGVWVTGIF. The Cytoplasmic portion of the chain corresponds to 123 to 772; it reads FFRQTLKLLL…DLFQVPKAYS (650 aa). The active-site Proton acceptor is the His-473. Residue 555–567 coordinates CoA; the sequence is GKGLIKKCRTSPD. Residues Tyr-589 and Thr-602 each coordinate (R)-carnitine.

Belongs to the carnitine/choline acetyltransferase family. Strong expression in heart and skeletal muscle. No expression in liver and kidney.

The protein resides in the mitochondrion outer membrane. It carries out the reaction (R)-carnitine + hexadecanoyl-CoA = O-hexadecanoyl-(R)-carnitine + CoA. Its pathway is lipid metabolism; fatty acid beta-oxidation. Functionally, catalyzes the transfer of the acyl group of long-chain fatty acid-CoA conjugates onto carnitine, an essential step for the mitochondrial uptake of long-chain fatty acids and their subsequent beta-oxidation in the mitochondrion. This Homo sapiens (Human) protein is Carnitine O-palmitoyltransferase 1, muscle isoform (CPT1B).